A 344-amino-acid chain; its full sequence is GDSL esterase/lipase At5g03590 (344 aa).

The first 19 residues, 1-19 (MHYLMKLFFSLSLFFGING), serve as a signal peptide directing secretion. Catalysis depends on serine 41, which acts as the Nucleophile. Asparagine 126, asparagine 227, and asparagine 238 each carry an N-linked (GlcNAc...) asparagine glycan. Aspartate 318 is an active-site residue.

This sequence belongs to the 'GDSL' lipolytic enzyme family.

It localises to the secreted. The chain is GDSL esterase/lipase At5g03590 from Arabidopsis thaliana (Mouse-ear cress).